The primary structure comprises 313 residues: Elongation factor Ts (313 aa).

Residues 82–85 (TDFV) are involved in Mg(2+) ion dislocation from EF-Tu.

It belongs to the EF-Ts family.

It is found in the cytoplasm. Associates with the EF-Tu.GDP complex and induces the exchange of GDP to GTP. It remains bound to the aminoacyl-tRNA.EF-Tu.GTP complex up to the GTP hydrolysis stage on the ribosome. The chain is Elongation factor Ts from Nostoc sp. (strain PCC 7120 / SAG 25.82 / UTEX 2576).